The primary structure comprises 260 residues: MSPAEASREENVYMAKLAEQAERYEEMVEFMEKVAKTTDVGELTVEERNLLSVAYKNVIGARRASWRIISSIEQKEESRGNEAYVASIKEYRSRIETELSKICDGILKLLDSHLVPSATAAESKVFYLKMKGDYHRYLAEFKSGAERKEAAENTLVAYKSAQDIALADLPTTHPIRLGLALNFSVFYYEILNSPDRACNLAKQAFDDAIAELDTLGEESYKDSTLIMQLLRDNLTLWTSDNAEDGGDEIKEAAKPEGEGH.

The disordered stretch occupies residues Asn241 to His260. Over residues Asp247 to His260 the composition is skewed to basic and acidic residues.

The protein belongs to the 14-3-3 family. In terms of assembly, may form a complex with the transcriptional activator VP1 and the bZIP transcription factor EMBP1. Expressed in seedlings, roots and panicles and at lower levels in flag leaves and internodes.

It is found in the cytoplasm. The protein localises to the nucleus. In terms of biological role, is associated with a DNA binding complex that binds to the G box, a well-characterized cis-acting DNA regulatory element found in plant genes. The protein is 14-3-3-like protein GF14-F (GF14F) of Oryza sativa subsp. japonica (Rice).